Reading from the N-terminus, the 320-residue chain is Adhesin MafA 1 (320 aa).

The first 18 residues, 1 to 18, serve as a signal peptide directing secretion; that stretch reads MQARLLIPILFSVFILSA. A lipid anchor (N-palmitoyl cysteine) is attached at Cys19. The S-diacylglycerol cysteine moiety is linked to residue Cys19. The tract at residues 288-320 is disordered; that stretch reads HMGNSAPSVEADNSHEGYGYSDEAVRRHRQGQP.

The protein belongs to the MafA family.

The protein localises to the cell outer membrane. This Neisseria meningitidis serogroup A / serotype 4A (strain DSM 15465 / Z2491) protein is Adhesin MafA 1 (mafA1).